Consider the following 164-residue polypeptide: Peroxynitrite isomerase (164 aa).

Residues 21–27 (GRWGGRG) carry the GXWXGXG motif. 2 residues coordinate heme b: K130 and H156.

It belongs to the nitrobindin family. Homodimer. The cofactor is heme b.

The enzyme catalyses peroxynitrite = nitrate. It participates in nitrogen metabolism. Heme-binding protein able to scavenge peroxynitrite and to protect free L-tyrosine against peroxynitrite-mediated nitration, by acting as a peroxynitrite isomerase that converts peroxynitrite to nitrate. Therefore, this protein likely plays a role in peroxynitrite sensing and in the detoxification of reactive nitrogen and oxygen species (RNS and ROS, respectively). Is able to bind nitric oxide (NO) in vitro, but may act as a sensor of peroxynitrite levels in vivo. This Nocardioides sp. (strain ATCC BAA-499 / JS614) protein is Peroxynitrite isomerase.